A 153-amino-acid chain; its full sequence is UPF0756 membrane protein BCQ_4399 (153 aa).

4 helical membrane passes run 8–28 (FLFI…TVAI), 54–74 (LGVT…EIGF), 87–107 (WIAL…VQLL), and 117–137 (LVFG…GPLI).

It belongs to the UPF0756 family.

It is found in the cell membrane. This is UPF0756 membrane protein BCQ_4399 from Bacillus cereus (strain Q1).